The following is a 432-amino-acid chain: UDP-N-acetylmuramoylalanine--D-glutamate ligase (432 aa).

ATP is bound at residue G98–T104.

The protein belongs to the MurCDEF family.

It localises to the cytoplasm. The enzyme catalyses UDP-N-acetyl-alpha-D-muramoyl-L-alanine + D-glutamate + ATP = UDP-N-acetyl-alpha-D-muramoyl-L-alanyl-D-glutamate + ADP + phosphate + H(+). It participates in cell wall biogenesis; peptidoglycan biosynthesis. In terms of biological role, cell wall formation. Catalyzes the addition of glutamate to the nucleotide precursor UDP-N-acetylmuramoyl-L-alanine (UMA). The chain is UDP-N-acetylmuramoylalanine--D-glutamate ligase from Fusobacterium nucleatum subsp. nucleatum (strain ATCC 25586 / DSM 15643 / BCRC 10681 / CIP 101130 / JCM 8532 / KCTC 2640 / LMG 13131 / VPI 4355).